An 86-amino-acid chain; its full sequence is Small ribosomal subunit protein bS20 (86 aa).

The protein belongs to the bacterial ribosomal protein bS20 family.

Binds directly to 16S ribosomal RNA. The polypeptide is Small ribosomal subunit protein bS20 (Kineococcus radiotolerans (strain ATCC BAA-149 / DSM 14245 / SRS30216)).